The following is a 156-amino-acid chain: Small ribosomal subunit protein uS7 (156 aa).

The protein belongs to the universal ribosomal protein uS7 family. As to quaternary structure, part of the 30S ribosomal subunit. Contacts proteins S9 and S11.

Its function is as follows. One of the primary rRNA binding proteins, it binds directly to 16S rRNA where it nucleates assembly of the head domain of the 30S subunit. Is located at the subunit interface close to the decoding center, probably blocks exit of the E-site tRNA. In Buchnera aphidicola subsp. Baizongia pistaciae (strain Bp), this protein is Small ribosomal subunit protein uS7.